Reading from the N-terminus, the 261-residue chain is Basic leucine zipper 19 (261 aa).

Disordered stretches follow at residues 1–22 and 74–100; these read MEDG…MGEL and ESDE…LGNR. The span at 8–18 shows a compositional bias: polar residues; the sequence is FSNQEVFSSSE. Residues 88–100 are compositionally biased toward basic and acidic residues; that stretch reads CGKKGEKRPLGNR. Residues 89–155 enclose the bZIP domain; the sequence is GKKGEKRPLG…SRLKCLLVDL (67 aa). The interval 90–113 is basic motif; it reads KKGEKRPLGNREAVRKYREKKKAK. A leucine-zipper region spans residues 117 to 131; that stretch reads LEDEVARLRAVNQQL. Over residues 237–248 the composition is skewed to low complexity; it reads NGSFSNVNTSVS. Residues 237 to 261 form a disordered region; that stretch reads NGSFSNVNTSVSNKRKGGHRASRAV. Basic residues predominate over residues 249-261; sequence NKRKGGHRASRAV.

It localises to the nucleus. Transcription factor involved in the response to zinc ion deficiency. Binds to the consensus sequence 5'-[AG]TGTCGACA[CT]-3' also called zinc deficiency response element (ZDRE). The ZDRE sequence is conserved in the plant kingdom and present in the promoters of genes that constitute the primary response to zinc deficiency, comprising additional ZIP metal transporter genes. Required for zinc accumulation in roots. Mediates the expression of the zinc transporters ZIP3, ZIP4, ZIP5 and ZIP9 during growth in zinc-deficient conditions. ZIP9 transporter is involved in zinc uptake in roots. The polypeptide is Basic leucine zipper 19 (Arabidopsis thaliana (Mouse-ear cress)).